Consider the following 168-residue polypeptide: Protein-export protein SecB (168 aa).

Residues 1–21 are disordered; that stretch reads MADQPSGNNDAKQAETNGNTV.

It belongs to the SecB family. In terms of assembly, homotetramer, a dimer of dimers. One homotetramer interacts with 1 SecA dimer.

Its subcellular location is the cytoplasm. One of the proteins required for the normal export of preproteins out of the cell cytoplasm. It is a molecular chaperone that binds to a subset of precursor proteins, maintaining them in a translocation-competent state. It also specifically binds to its receptor SecA. The chain is Protein-export protein SecB from Chelativorans sp. (strain BNC1).